The primary structure comprises 31 residues: Cliotide T13 (31 aa).

Positions 1–31 (DTTPCGESCVWIPCVSSIVGCSCQNKVCYQN) form a cross-link, cyclopeptide (Asp-Asn). 3 cysteine pairs are disulfide-bonded: cysteine 5–cysteine 21, cysteine 9–cysteine 23, and cysteine 14–cysteine 28.

Post-translationally, contains 3 disulfide bonds. In terms of processing, this is a cyclic peptide. As to expression, expressed in seed but not in root nodules.

Its function is as follows. Probably participates in a plant defense mechanism. Not active against Gram-negative bacterium E.coli ATCC 700926 or Gram-positive bacterium S.aureus ATCC 12600 up to a concentration of 100 uM under low-salt conditions. The sequence is that of Cliotide T13 from Clitoria ternatea (Butterfly pea).